We begin with the raw amino-acid sequence, 376 residues long: Growth/differentiation factor 8 (376 aa).

Residues 1-24 (MIQKPQMYVYIYLFVLIAAGPVDL) form the signal peptide. Residues 25 to 267 (NEDSEREANV…VTDTPKRSRR (243 aa)) constitute a propeptide that is removed on maturation. Asn-72 is a glycosylation site (N-linked (GlcNAc...) asparagine). Disulfide bonds link Cys-273/Cys-283, Cys-282/Cys-341, Cys-310/Cys-373, and Cys-314/Cys-375.

The protein belongs to the TGF-beta family. In terms of assembly, homodimer; disulfide-linked. Interacts with WFIKKN2, leading to inhibit its activity. Interacts with FSTL3. Synthesized as large precursor molecule that undergoes proteolytic cleavage to generate an N-terminal propeptide and a disulfide linked C-terminal dimer, which is the biologically active molecule. The circulating form consists of a latent complex of the C-terminal dimer and other proteins, including its propeptide, which maintain the C-terminal dimer in a latent, inactive state. Ligand activation requires additional cleavage of the prodomain by a tolloid-like metalloproteinase.

It is found in the secreted. In terms of biological role, acts specifically as a negative regulator of skeletal muscle growth. The polypeptide is Growth/differentiation factor 8 (Mstn) (Rattus norvegicus (Rat)).